The primary structure comprises 268 residues: Undecaprenyl-diphosphatase (268 aa).

A run of 8 helical transmembrane segments spans residues 9–29 (VILG…TGHL), 47–67 (FDVL…FAKL), 83–103 (FIIG…AAGS), 107–127 (LFLF…AVLL), 144–164 (FPVL…IPGV), 184–204 (AAEF…VYDL), 218–238 (IVAV…KTFL), and 246–266 (FQLF…ALAM).

The protein belongs to the UppP family.

Its subcellular location is the cell inner membrane. It catalyses the reaction di-trans,octa-cis-undecaprenyl diphosphate + H2O = di-trans,octa-cis-undecaprenyl phosphate + phosphate + H(+). Catalyzes the dephosphorylation of undecaprenyl diphosphate (UPP). Confers resistance to bacitracin. The chain is Undecaprenyl-diphosphatase from Rhodopseudomonas palustris (strain HaA2).